The chain runs to 570 residues: Proline--tRNA ligase (570 aa).

It belongs to the class-II aminoacyl-tRNA synthetase family. ProS type 1 subfamily. As to quaternary structure, homodimer.

It is found in the cytoplasm. The enzyme catalyses tRNA(Pro) + L-proline + ATP = L-prolyl-tRNA(Pro) + AMP + diphosphate. In terms of biological role, catalyzes the attachment of proline to tRNA(Pro) in a two-step reaction: proline is first activated by ATP to form Pro-AMP and then transferred to the acceptor end of tRNA(Pro). As ProRS can inadvertently accommodate and process non-cognate amino acids such as alanine and cysteine, to avoid such errors it has two additional distinct editing activities against alanine. One activity is designated as 'pretransfer' editing and involves the tRNA(Pro)-independent hydrolysis of activated Ala-AMP. The other activity is designated 'posttransfer' editing and involves deacylation of mischarged Ala-tRNA(Pro). The misacylated Cys-tRNA(Pro) is not edited by ProRS. The polypeptide is Proline--tRNA ligase (Thermoanaerobacter sp. (strain X514)).